The sequence spans 142 residues: Large ribosomal subunit protein uL11 (142 aa).

This sequence belongs to the universal ribosomal protein uL11 family. Part of the ribosomal stalk of the 50S ribosomal subunit. Interacts with L10 and the large rRNA to form the base of the stalk. L10 forms an elongated spine to which L12 dimers bind in a sequential fashion forming a multimeric L10(L12)X complex. One or more lysine residues are methylated.

Its function is as follows. Forms part of the ribosomal stalk which helps the ribosome interact with GTP-bound translation factors. This chain is Large ribosomal subunit protein uL11, found in Actinobacillus succinogenes (strain ATCC 55618 / DSM 22257 / CCUG 43843 / 130Z).